Here is a 280-residue protein sequence, read N- to C-terminus: MLIARSIADLRQALAPYRHPAFVPTMGNLHDGHIALMRLAKPLGDVTVASIFVNRLQFLPHEDFDSYPRTWEADCAQLQAVGCDLLFAPREADLYPQPQTFKLHPDPALADRLEGQFRPGFFVGVGTVVLKLFACVLGKTGGTAVFGKKDYQQLMVIRQMVQQLALPIEIVAGETCRAADGLALSSRNGFLSLAERQEAVALPLALQQLARRWREARNPGPALEQQALDALRARGWQPDYLTVCRRADLQPATAQDAPGTLVALGAARLATTRLIDNLEF.

ATP is bound at residue 26-33 (MGNLHDGH). Catalysis depends on His-33, which acts as the Proton donor. (R)-pantoate is bound at residue Gln-57. Residue Gln-57 coordinates beta-alanine. ATP is bound at residue 147–150 (GKKD). Gln-153 is a (R)-pantoate binding site. 184 to 187 (LSSR) provides a ligand contact to ATP.

This sequence belongs to the pantothenate synthetase family. Homodimer.

It is found in the cytoplasm. It carries out the reaction (R)-pantoate + beta-alanine + ATP = (R)-pantothenate + AMP + diphosphate + H(+). Its pathway is cofactor biosynthesis; (R)-pantothenate biosynthesis; (R)-pantothenate from (R)-pantoate and beta-alanine: step 1/1. Catalyzes the condensation of pantoate with beta-alanine in an ATP-dependent reaction via a pantoyl-adenylate intermediate. This is Pantothenate synthetase from Verminephrobacter eiseniae (strain EF01-2).